The following is a 440-amino-acid chain: Damage-control phosphatase ARMT1 (440 aa).

Positions 252 and 253 each coordinate Mn(2+). 252–253 (DN) is a substrate binding site. S-adenosyl-L-methionine contacts are provided by glutamate 257 and aspartate 290. Position 290 (aspartate 290) interacts with Mn(2+). Residues 366 to 370 (DLNYR) and lysine 403 contribute to the substrate site. Positions 400–403 (RTLK) match the Subfamily III RTxK motif motif.

The protein belongs to the damage-control phosphatase family. Sugar phosphate phosphatase III subfamily. Mn(2+) serves as cofactor. The cofactor is Ni(2+). Automethylated.

The catalysed reaction is beta-D-fructose 1-phosphate + H2O = D-fructose + phosphate. The enzyme catalyses beta-D-fructose 6-phosphate = dihydroxyacetone + D-glyceraldehyde 3-phosphate. It catalyses the reaction L-glutamyl-[protein] + S-adenosyl-L-methionine = [protein]-L-glutamate 5-O-methyl ester + S-adenosyl-L-homocysteine. Functionally, metal-dependent phosphatase that shows phosphatase activity against several substrates, including fructose-1-phosphate and fructose-6-phosphate. Its preference for fructose-1-phosphate, a strong glycating agent that causes DNA damage rather than a canonical yeast metabolite, suggests a damage-control function in hexose phosphate metabolism. Has also been shown to have O-methyltransferase activity that methylates glutamate residues of target proteins to form gamma-glutamyl methyl ester residues. Possibly methylates PCNA, suggesting it is involved in the DNA damage response. This Xenopus laevis (African clawed frog) protein is Damage-control phosphatase ARMT1.